The chain runs to 514 residues: ATP synthase subunit alpha (514 aa).

170 to 177 (GDRQIGKT) contributes to the ATP binding site.

It belongs to the ATPase alpha/beta chains family. As to quaternary structure, F-type ATPases have 2 components, CF(1) - the catalytic core - and CF(0) - the membrane proton channel. CF(1) has five subunits: alpha(3), beta(3), gamma(1), delta(1), epsilon(1). CF(0) has three main subunits: a(1), b(2) and c(9-12). The alpha and beta chains form an alternating ring which encloses part of the gamma chain. CF(1) is attached to CF(0) by a central stalk formed by the gamma and epsilon chains, while a peripheral stalk is formed by the delta and b chains.

The protein localises to the cell inner membrane. It carries out the reaction ATP + H2O + 4 H(+)(in) = ADP + phosphate + 5 H(+)(out). Functionally, produces ATP from ADP in the presence of a proton gradient across the membrane. The alpha chain is a regulatory subunit. This Pseudomonas fluorescens (strain SBW25) protein is ATP synthase subunit alpha.